The primary structure comprises 166 residues: UPF0304 protein VS_1049 (166 aa).

Belongs to the UPF0304 family.

This is UPF0304 protein VS_1049 from Vibrio atlanticus (strain LGP32) (Vibrio splendidus (strain Mel32)).